The primary structure comprises 223 residues: Nicotinamide/nicotinic acid mononucleotide adenylyltransferase 2 (223 aa).

NAD(+) contacts are provided by Ser-11 and Phe-12. ATP is bound at residue His-19. Residues Trp-87, Thr-90, Gly-116, Asp-118, Leu-133, Trp-134, and Arg-153 each coordinate NAD(+). 190–191 (TR) contributes to the ATP binding site.

Belongs to the eukaryotic NMN adenylyltransferase family. A divalent metal cation is required as a cofactor.

The catalysed reaction is beta-nicotinamide D-ribonucleotide + ATP + H(+) = diphosphate + NAD(+). The enzyme catalyses nicotinate beta-D-ribonucleotide + ATP + H(+) = deamido-NAD(+) + diphosphate. The protein operates within cofactor biosynthesis; NAD(+) biosynthesis; deamido-NAD(+) from nicotinate D-ribonucleotide: step 1/1. Its pathway is cofactor biosynthesis; NAD(+) biosynthesis; NAD(+) from nicotinamide D-ribonucleotide: step 1/1. Functionally, catalyzes the formation of NAD(+) from nicotinamide mononucleotide (NMN) and ATP. Can also use the deamidated form; nicotinic acid mononucleotide (NaMN) as substrate. The protein is Nicotinamide/nicotinic acid mononucleotide adenylyltransferase 2 of Caenorhabditis elegans.